Reading from the N-terminus, the 82-residue chain is Small ribosomal subunit protein bS18 (82 aa).

Belongs to the bacterial ribosomal protein bS18 family. In terms of assembly, part of the 30S ribosomal subunit. Forms a tight heterodimer with protein bS6.

Binds as a heterodimer with protein bS6 to the central domain of the 16S rRNA, where it helps stabilize the platform of the 30S subunit. The sequence is that of Small ribosomal subunit protein bS18 from Bifidobacterium longum (strain NCC 2705).